The chain runs to 162 residues: Disulfide bond formation protein B (162 aa).

The Cytoplasmic portion of the chain corresponds to 1–8 (MTPLFRKA). A helical transmembrane segment spans residues 9–25 (VWLLFAVSVCAFAGSLA). Residues 26-43 (AQYVLGMEPCVLCISQRL) are Periplasmic-facing. C35 and C38 are disulfide-bonded. A helical membrane pass occupies residues 44–60 (CVLATALCTAIVLMCRP). At 61-67 (RRRAGGL) the chain is on the cytoplasmic side. The helical transmembrane segment at 68 to 85 (FGAVFISIPAVTGISVAA) threads the bilayer. The Periplasmic segment spans residues 86-141 (YQLWLQSLPPGTAPSCGAPWTFRLKGWSLFDWFEPVVRGFGNCAEPDYLLGVALPV). The cysteines at positions 101 and 128 are disulfide-linked. Residues 142–160 (WSAAYFLAVVLTVWWAWAR) form a helical membrane-spanning segment. At 161 to 162 (AK) the chain is on the cytoplasmic side.

This sequence belongs to the DsbB family.

Its subcellular location is the cell inner membrane. In terms of biological role, required for disulfide bond formation in some periplasmic proteins. Acts by oxidizing the DsbA protein. In Neisseria meningitidis serogroup C / serotype 2a (strain ATCC 700532 / DSM 15464 / FAM18), this protein is Disulfide bond formation protein B.